A 657-amino-acid polypeptide reads, in one-letter code: Broad substrate specificity ATP-binding cassette transporter ABCG2 (657 aa).

Residues 1–24 (MSSSNDHVLVPMSQRNNNGLPRTN) form a disordered region. Residues 1-393 (MSSSNDHVLV…SFKNLLGNPQ (393 aa)) are Cytoplasmic-facing. Residues 13–24 (SQRNNNGLPRTN) are compositionally biased toward polar residues. One can recognise an ABC transporter domain in the interval 48-285 (VKSGFLVRKT…FASAGYHCEP (238 aa)). Residues 79–86 (GPTGGGKS), 183–189 (RGISGGE), E210, and H242 contribute to the ATP site. One can recognise an ABC transmembrane type-2 domain in the interval 389 to 653 (LGNPQASVAQ…TIAYLKLLFL (265 aa)). A helical membrane pass occupies residues 394-414 (ASVAQLIVTVILGLIIGAIYF). Over 415-428 (DLKYDAAGMQNRAG) the chain is Extracellular. The chain crosses the membrane as a helical span at residues 429-449 (VLFFLTTNQCFSSVSAVELFV). Topologically, residues 450–477 (VEKKLFIHEYISGYYRVSSYFFGKVMSD) are cytoplasmic. A helical membrane pass occupies residues 478–498 (LLPMRFLPSVIFTCVLYFMLG). The Extracellular portion of the chain corresponds to 499–506 (LKKTVDAF). Residues 507 to 527 (FIMMFTLIMVAYTASSMALAI) form a helical membrane-spanning segment. Over 528–535 (ATGQSVVS) the chain is Cytoplasmic. Residues 536–556 (VATLLMTIAFVFMMLFSGLLV) traverse the membrane as a helical segment. Residues 557 to 632 (NLRTIGPWLS…LSPWGLWKNH (76 aa)) lie on the Extracellular side of the membrane. C592 and C610 are joined by a disulfide. N-linked (GlcNAc...) asparagine glycans are attached at residues N596 and N600. The chain crosses the membrane as a helical span at residues 633 to 653 (VALACMIIIFLTIAYLKLLFL). The Cytoplasmic portion of the chain corresponds to 654–657 (KKYS).

This sequence belongs to the ABC transporter superfamily. ABCG family. Eye pigment precursor importer (TC 3.A.1.204) subfamily. As to quaternary structure, homodimer; disulfide-linked. The minimal functional unit is a homodimer, but the major oligomeric form in plasma membrane is a homotetramer with possibility of higher order oligomerization up to homododecamers. Post-translationally, N-glycosylated. Glycosylation-deficient ABCG2 is normally expressed and functional. In terms of processing, phosphorylated. Phosphorylation may regulate the localization to the plasma membrane, the homooligomerization and therefore, the activity of the transporter. In terms of tissue distribution, highly expressed in kidney. Lower expression in liver, colon, heart, spleen, and placenta. Expressed in mammary gland. Expressed in intestinal villi and renal proximal tubules, hepatic bile canalicular membranes, and placental labyrinth cells (at protein level).

It is found in the cell membrane. It localises to the apical cell membrane. The protein resides in the mitochondrion membrane. The catalysed reaction is ATP + H2O + xenobioticSide 1 = ADP + phosphate + xenobioticSide 2.. It carries out the reaction riboflavin(in) + ATP + H2O = riboflavin(out) + ADP + phosphate + H(+). It catalyses the reaction pheophorbide a(in) + ATP + H2O = pheophorbide a(out) + ADP + phosphate + H(+). The enzyme catalyses urate(in) + ATP + H2O = urate(out) + ADP + phosphate + H(+). The catalysed reaction is indoxyl sulfate(in) + ATP + H2O = indoxyl sulfate(out) + ADP + phosphate + H(+). It carries out the reaction sphing-4-enine 1-phosphate(in) + ATP + H2O = sphing-4-enine 1-phosphate(out) + ADP + phosphate + H(+). It catalyses the reaction estrone 3-sulfate(in) + ATP + H2O = estrone 3-sulfate(out) + ADP + phosphate + H(+). The enzyme catalyses dehydroepiandrosterone 3-sulfate(in) + ATP + H2O = dehydroepiandrosterone 3-sulfate(out) + ADP + phosphate + H(+). The catalysed reaction is 4-methylumbelliferone sulfate(in) + ATP + H2O = 4-methylumbelliferone sulfate(out) + ADP + phosphate + H(+). It carries out the reaction 5,7-dimethyl-2-methylamino-4-(3-pyridylmethyl)-1,3-benzothiazol-6-yl beta-D-glucuronate(in) + ATP + H2O = 5,7-dimethyl-2-methylamino-4-(3-pyridylmethyl)-1,3-benzothiazol-6-yl beta-D-glucuronate(out) + ADP + phosphate + H(+). It catalyses the reaction 4-methylumbelliferone beta-D-glucuronate(in) + ATP + H2O = 4-methylumbelliferone beta-D-glucuronate(out) + ADP + phosphate + H(+). The enzyme catalyses 5,7-dimethyl-2-methylamino-4-(3-pyridylmethyl)-1,3-benzothiazol-6-yl sulfate(in) + ATP + H2O = 5,7-dimethyl-2-methylamino-4-(3-pyridylmethyl)-1,3-benzothiazol-6-yl sulfate(out) + ADP + phosphate + H(+). The catalysed reaction is 17beta-estradiol 17-O-(beta-D-glucuronate)(in) + ATP + H2O = 17beta-estradiol 17-O-(beta-D-glucuronate)(out) + ADP + phosphate + H(+). It carries out the reaction methotrexate(in) + ATP + H2O = methotrexate(out) + ADP + phosphate + H(+). It catalyses the reaction itaconate(in) + ATP + H2O = itaconate(out) + ADP + phosphate + H(+). With respect to regulation, specifically inhibited by the fungal toxin fumitremorgin C and Ko143. Functionally, broad substrate specificity ATP-dependent transporter of the ATP-binding cassette (ABC) family that actively extrudes a wide variety of physiological compounds, dietary toxins and xenobiotics from cells. Involved in porphyrin homeostasis, mediating the export of protoporphyrin IX (PPIX) from both mitochondria to cytosol and cytosol to extracellular space, it also functions in the cellular export of heme. Also mediates the efflux of sphingosine-1-P from cells. Acts as a urate exporter functioning in both renal and extrarenal urate excretion. In kidney, it also functions as a physiological exporter of the uremic toxin indoxyl sulfate. Also involved in the excretion of steroids like estrone 3-sulfate/E1S, 3beta-sulfooxy-androst-5-en-17-one/DHEAS, and other sulfate conjugates. Mediates the secretion of the riboflavin and biotin vitamins into milk. Extrudes pheophorbide a, a phototoxic porphyrin catabolite of chlorophyll, reducing its bioavailability. Plays an important role in the exclusion of xenobiotics from the brain. It confers to cells a resistance to multiple drugs and other xenobiotics including mitoxantrone, pheophorbide, camptothecin, methotrexate, azidothymidine, and the anthracyclines daunorubicin and doxorubicin, through the control of their efflux. In placenta, it limits the penetration of drugs from the maternal plasma into the fetus. May play a role in early stem cell self-renewal by blocking differentiation. In inflammatory macrophages, exports itaconate from the cytosol to the extracellular compartment and limits the activation of TFEB-dependent lysosome biogenesis involved in antibacterial innate immune response. This Mus musculus (Mouse) protein is Broad substrate specificity ATP-binding cassette transporter ABCG2 (Abcg2).